An 85-amino-acid polypeptide reads, in one-letter code: Cell division protein ZapA (85 aa).

Residues 60 to 85 (AVNVVHDYLKLKEELERLKGQIKEKD) are a coiled coil.

The protein belongs to the ZapA family. Type 2 subfamily. In terms of assembly, homodimer. Interacts with FtsZ.

The protein localises to the cytoplasm. Its function is as follows. Activator of cell division through the inhibition of FtsZ GTPase activity, therefore promoting FtsZ assembly into bundles of protofilaments necessary for the formation of the division Z ring. It is recruited early at mid-cell but it is not essential for cell division. The sequence is that of Cell division protein ZapA from Bacillus licheniformis (strain ATCC 14580 / DSM 13 / JCM 2505 / CCUG 7422 / NBRC 12200 / NCIMB 9375 / NCTC 10341 / NRRL NRS-1264 / Gibson 46).